The chain runs to 1598 residues: Transposon Ty2-LR2 Gag-Pol polyprotein (1598 aa).

Composition is skewed to polar residues over residues 1–11 (MESQQLHQNPH), 19–39 (ASVT…SASN), and 49–60 (KVNSQEETTPGT). 2 disordered regions span residues 1–88 (MESQ…YQQH) and 359–449 (QHSE…SNDE). Residues 295 to 397 (ENNINVSDRL…SSKPRAAKAH (103 aa)) form an RNA-binding region. Residues 369–381 (TSPNTTNTKVTTR) show a composition bias toward low complexity. Composition is skewed to polar residues over residues 399–408 (IATSSKFSRV) and 415–435 (ESTV…GQQQ). Residue Asp457 is the For protease activity; shared with dimeric partner of the active site. The segment at 579–636 (NVNKSKSVNKYPYPLIHRMLGHANFRSIQKSLKKNAVTYLKESDIEWSNASTYQCPDC) is integrase-type zinc finger-like. The Integrase catalytic domain maps to 656-831 (ESYEPFQYLH…AGLDITTILP (176 aa)). Mg(2+) contacts are provided by Asp667 and Asp732. Polar residues-rich tracts occupy residues 915 to 927 (SFIE…QSYD), 1009 to 1034 (ESDT…STNE), and 1065 to 1082 (QRNS…STPS). Disordered regions lie at residues 915–934 (SFIE…ESDH), 1004–1034 (MGGT…STNE), 1059–1135 (TEEP…KSSK), 1146–1165 (LPLP…VSKD), and 1170–1205 (HSRQ…TEIE). The span at 1151–1165 (LTHKSPTDTSDVSKD) shows a compositional bias: basic and acidic residues. Residues 1193 to 1227 (KKRSLEDNETEIEVSRDTWNNKNMRSLEPPRSKKR) carry the Bipartite nuclear localization signal motif. The Reverse transcriptase Ty1/copia-type domain maps to 1353–1491 (NDYYITQLDI…DILGLEIKYQ (139 aa)). Mg(2+) contacts are provided by Asp1361, Asp1442, and Asp1443.

In terms of assembly, the capsid protein forms a homotrimer, from which the VLPs are assembled. The protease is a homodimer, whose active site consists of two apposed aspartic acid residues. Post-translationally, initially, virus-like particles (VLPs) are composed of the structural unprocessed proteins Gag and Gag-Pol, and also contain the host initiator methionine tRNA (tRNA(i)-Met) which serves as a primer for minus-strand DNA synthesis, and a dimer of genomic Ty RNA. Processing of the polyproteins occurs within the particle and proceeds by an ordered pathway, called maturation. First, the protease (PR) is released by autocatalytic cleavage of the Gag-Pol polyprotein, and this cleavage is a prerequisite for subsequent processing at the remaining sites to release the mature structural and catalytic proteins. Maturation takes place prior to the RT reaction and is required to produce transposition-competent VLPs.

It localises to the cytoplasm. The protein resides in the nucleus. The catalysed reaction is DNA(n) + a 2'-deoxyribonucleoside 5'-triphosphate = DNA(n+1) + diphosphate. The enzyme catalyses Endonucleolytic cleavage to 5'-phosphomonoester.. Capsid protein (CA) is the structural component of the virus-like particle (VLP), forming the shell that encapsulates the retrotransposons dimeric RNA genome. The particles are assembled from trimer-clustered units and there are holes in the capsid shells that allow for the diffusion of macromolecules. CA also has nucleocapsid-like chaperone activity, promoting primer tRNA(i)-Met annealing to the multipartite primer-binding site (PBS), dimerization of Ty2 RNA and initiation of reverse transcription. In terms of biological role, the aspartyl protease (PR) mediates the proteolytic cleavages of the Gag and Gag-Pol polyproteins after assembly of the VLP. Its function is as follows. Reverse transcriptase/ribonuclease H (RT) is a multifunctional enzyme that catalyzes the conversion of the retro-elements RNA genome into dsDNA within the VLP. The enzyme displays a DNA polymerase activity that can copy either DNA or RNA templates, and a ribonuclease H (RNase H) activity that cleaves the RNA strand of RNA-DNA heteroduplexes during plus-strand synthesis and hydrolyzes RNA primers. The conversion leads to a linear dsDNA copy of the retrotransposon that includes long terminal repeats (LTRs) at both ends. Functionally, integrase (IN) targets the VLP to the nucleus, where a subparticle preintegration complex (PIC) containing at least integrase and the newly synthesized dsDNA copy of the retrotransposon must transit the nuclear membrane. Once in the nucleus, integrase performs the integration of the dsDNA into the host genome. This chain is Transposon Ty2-LR2 Gag-Pol polyprotein (TY2B-LR2), found in Saccharomyces cerevisiae (strain ATCC 204508 / S288c) (Baker's yeast).